The primary structure comprises 339 residues: DNA-directed RNA polymerase subunit alpha (339 aa).

The interval 1-238 is alpha N-terminal domain (alpha-NTD); sequence MVDPIVTKNW…EQLSIFINFD (238 aa). Residues 255–339 are alpha C-terminal domain (alpha-CTD); it reads LNENLFRSVD…KAAPQGAPKV (85 aa).

Belongs to the RNA polymerase alpha chain family. In terms of assembly, homodimer. The RNAP catalytic core consists of 2 alpha, 1 beta, 1 beta' and 1 omega subunit. When a sigma factor is associated with the core the holoenzyme is formed, which can initiate transcription.

The catalysed reaction is RNA(n) + a ribonucleoside 5'-triphosphate = RNA(n+1) + diphosphate. DNA-dependent RNA polymerase catalyzes the transcription of DNA into RNA using the four ribonucleoside triphosphates as substrates. The sequence is that of DNA-directed RNA polymerase subunit alpha from Anaeromyxobacter sp. (strain Fw109-5).